The primary structure comprises 304 residues: Acetyl-coenzyme A carboxylase carboxyl transferase subunit beta (304 aa).

Residues 23 to 292 form the CoA carboxyltransferase N-terminal domain; sequence VWTKCDSCGQ…PNPEAPREGV (270 aa). Zn(2+) is bound by residues Cys27, Cys30, Cys46, and Cys49. Residues 27 to 49 form a C4-type zinc finger; it reads CDSCGQVLYRAELERNLEVCPKC. The interval 284 to 304 is disordered; that stretch reads NPEAPREGVVVPPVPDQEPEA. Residues 295–304 show a composition bias toward pro residues; that stretch reads PPVPDQEPEA.

This sequence belongs to the AccD/PCCB family. In terms of assembly, acetyl-CoA carboxylase is a heterohexamer composed of biotin carboxyl carrier protein (AccB), biotin carboxylase (AccC) and two subunits each of ACCase subunit alpha (AccA) and ACCase subunit beta (AccD). Requires Zn(2+) as cofactor.

Its subcellular location is the cytoplasm. The catalysed reaction is N(6)-carboxybiotinyl-L-lysyl-[protein] + acetyl-CoA = N(6)-biotinyl-L-lysyl-[protein] + malonyl-CoA. Its pathway is lipid metabolism; malonyl-CoA biosynthesis; malonyl-CoA from acetyl-CoA: step 1/1. Functionally, component of the acetyl coenzyme A carboxylase (ACC) complex. Biotin carboxylase (BC) catalyzes the carboxylation of biotin on its carrier protein (BCCP) and then the CO(2) group is transferred by the transcarboxylase to acetyl-CoA to form malonyl-CoA. In Escherichia coli O139:H28 (strain E24377A / ETEC), this protein is Acetyl-coenzyme A carboxylase carboxyl transferase subunit beta.